We begin with the raw amino-acid sequence, 632 residues long: 1-deoxy-D-xylulose-5-phosphate synthase (632 aa).

Residues His-87 and 128 to 130 (GHS) each bind thiamine diphosphate. Residue Asp-159 participates in Mg(2+) binding. Residues 160–161 (GA), Asn-188, Phe-295, and Glu-378 each bind thiamine diphosphate. Asn-188 contacts Mg(2+).

The protein belongs to the transketolase family. DXPS subfamily. In terms of assembly, homodimer. Mg(2+) serves as cofactor. The cofactor is thiamine diphosphate.

It carries out the reaction D-glyceraldehyde 3-phosphate + pyruvate + H(+) = 1-deoxy-D-xylulose 5-phosphate + CO2. It functions in the pathway metabolic intermediate biosynthesis; 1-deoxy-D-xylulose 5-phosphate biosynthesis; 1-deoxy-D-xylulose 5-phosphate from D-glyceraldehyde 3-phosphate and pyruvate: step 1/1. Functionally, catalyzes the acyloin condensation reaction between C atoms 2 and 3 of pyruvate and glyceraldehyde 3-phosphate to yield 1-deoxy-D-xylulose-5-phosphate (DXP). The polypeptide is 1-deoxy-D-xylulose-5-phosphate synthase (Pseudomonas fluorescens (strain SBW25)).